Consider the following 1287-residue polypeptide: Cell adhesion molecule-related/down-regulated by oncogenes (1287 aa).

A signal peptide spans 1-25 (MHPDLGPLCTLLYVTLTILCSSVSS). The Extracellular segment spans residues 26–963 (DLAPYFTSEP…PATSPARSSD (938 aa)). Ig-like C2-type domains lie at 29-114 (PYFT…ATVS), 120-204 (DFGS…LKVE), 225-303 (PTHS…KYVT), 310-396 (EHAS…GRLE), and 405-516 (PVII…ASLM). Cys-50 and Cys-97 are disulfide-bonded. N-linked (GlcNAc...) asparagine glycosylation is found at Asn-88, Asn-100, Asn-180, Asn-287, Asn-294, Asn-342, and Asn-427. Cystine bridges form between Cys-141-Cys-191 and Cys-243-Cys-290. Disulfide bonds link Cys-333–Cys-380 and Cys-426–Cys-500. The tract at residues 531–553 (LPDAAQNDDRSKRDGSETGLLSS) is disordered. A compositionally biased stretch (basic and acidic residues) spans 537–546 (NDDRSKRDGS). Residue Asn-570 is glycosylated (N-linked (GlcNAc...) asparagine). Fibronectin type-III domains follow at residues 579–677 (APII…SKEK), 723–821 (APDR…FPNR), and 826–926 (PITG…TKVK). A glycan (N-linked (GlcNAc...) asparagine) is linked at Asn-873. Residues 933–955 (EYPVKDLSTPPNSLGSGGNVGPA) form a disordered region. Residues 964–984 (MLYLIVGCVLGVMVLILMVFI) traverse the membrane as a helical segment. Residues 985–1287 (AMCLWKNRQQ…TEVLQQPRET (303 aa)) are Cytoplasmic-facing. A disordered region spans residues 1268-1287 (SPPGIPLDSPTEVLQQPRET).

As to quaternary structure, part of a complex that contains BOC, CDON, NEO1, cadherins and CTNNB1. Interacts with NTN3. Interacts with PTCH1. Interacts with GAS1. Interacts with DHH, IHH and SHH. Post-translationally, N-glycosylated.

It localises to the cell membrane. In terms of biological role, component of a cell-surface receptor complex that mediates cell-cell interactions between muscle precursor cells. Promotes differentiation of myogenic cells. This is Cell adhesion molecule-related/down-regulated by oncogenes (CDON) from Homo sapiens (Human).